We begin with the raw amino-acid sequence, 201 residues long: UPF0301 protein MSMEG_6921/MSMEI_6732 (201 aa).

This sequence belongs to the UPF0301 (AlgH) family.

The polypeptide is UPF0301 protein MSMEG_6921/MSMEI_6732 (Mycolicibacterium smegmatis (strain ATCC 700084 / mc(2)155) (Mycobacterium smegmatis)).